The primary structure comprises 158 residues: Crossover junction endodeoxyribonuclease RuvC (158 aa).

Catalysis depends on residues Asp-7, Glu-67, and Asp-140. Residues Asp-7, Glu-67, and Asp-140 each coordinate Mg(2+).

This sequence belongs to the RuvC family. As to quaternary structure, homodimer which binds Holliday junction (HJ) DNA. The HJ becomes 2-fold symmetrical on binding to RuvC with unstacked arms; it has a different conformation from HJ DNA in complex with RuvA. In the full resolvosome a probable DNA-RuvA(4)-RuvB(12)-RuvC(2) complex forms which resolves the HJ. Mg(2+) serves as cofactor.

The protein resides in the cytoplasm. The catalysed reaction is Endonucleolytic cleavage at a junction such as a reciprocal single-stranded crossover between two homologous DNA duplexes (Holliday junction).. In terms of biological role, the RuvA-RuvB-RuvC complex processes Holliday junction (HJ) DNA during genetic recombination and DNA repair. Endonuclease that resolves HJ intermediates. Cleaves cruciform DNA by making single-stranded nicks across the HJ at symmetrical positions within the homologous arms, yielding a 5'-phosphate and a 3'-hydroxyl group; requires a central core of homology in the junction. The consensus cleavage sequence is 5'-(A/T)TT(C/G)-3'. Cleavage occurs on the 3'-side of the TT dinucleotide at the point of strand exchange. HJ branch migration catalyzed by RuvA-RuvB allows RuvC to scan DNA until it finds its consensus sequence, where it cleaves and resolves the cruciform DNA. In Dictyoglomus turgidum (strain DSM 6724 / Z-1310), this protein is Crossover junction endodeoxyribonuclease RuvC.